The sequence spans 386 residues: Cytochrome b (386 aa).

Helical transmembrane passes span 32–52 (LGSLLGLCLVIQICTGIFLAM), 76–98 (WFIRYAHANGASFFFICMYIHIG), 113–133 (VWNVGVIIFVLTMAAAFLGYC), and 179–199 (FFAFHYLVPFIIAAFVIMHFM). Heme b contacts are provided by His82 and His96. Residues His183 and His197 each coordinate heme b. His202 lines the a ubiquinone pocket. 4 helical membrane-spanning segments follow: residues 225-245 (FIFKDLITVFVFLFFFSLFVF), 289-309 (LLGVLAMFGAILILLVLPITD), 321-341 (FSKFFFFLFIANFVLLGHLGE), and 348-368 (FVVMGQIATVIYFAYFLVIVP).

It belongs to the cytochrome b family. Fungal cytochrome b-c1 complex contains 10 subunits; 3 respiratory subunits, 2 core proteins and 5 low-molecular weight proteins. Cytochrome b-c1 complex is a homodimer. Heme b is required as a cofactor.

It localises to the mitochondrion inner membrane. Component of the ubiquinol-cytochrome c reductase complex (complex III or cytochrome b-c1 complex) that is part of the mitochondrial respiratory chain. The b-c1 complex mediates electron transfer from ubiquinol to cytochrome c. Contributes to the generation of a proton gradient across the mitochondrial membrane that is then used for ATP synthesis. The sequence is that of Cytochrome b (COB) from Kluyveromyces lactis (strain ATCC 8585 / CBS 2359 / DSM 70799 / NBRC 1267 / NRRL Y-1140 / WM37) (Yeast).